Reading from the N-terminus, the 121-residue chain is Putative viral protein-binding protein C1 (121 aa).

The interval 21 to 57 (PWDRTRGHPDVPWRNLTSSPTRPLAQPAGSCMPAEPS) is disordered.

Interacts with core protein of hepatitis B virus.

The chain is Putative viral protein-binding protein C1 from Homo sapiens (Human).